A 325-amino-acid chain; its full sequence is GTP 3',8-cyclase (325 aa).

One can recognise a Radical SAM core domain in the interval 10 to 229; that stretch reads GYGRRINYLR…PSLEKIKSED (220 aa). Arg19 lines the GTP pocket. Cys26 and Cys30 together coordinate [4Fe-4S] cluster. An S-adenosyl-L-methionine-binding site is contributed by Tyr32. Cys33 contacts [4Fe-4S] cluster. Arg69 contacts GTP. Gly73 serves as a coordination point for S-adenosyl-L-methionine. Thr100 lines the GTP pocket. Ser124 is an S-adenosyl-L-methionine binding site. Position 161 (Lys161) interacts with GTP. S-adenosyl-L-methionine is bound at residue Met195. Residues Cys257 and Cys260 each contribute to the [4Fe-4S] cluster site. 262-264 contacts GTP; it reads RLR. [4Fe-4S] cluster is bound at residue Cys274.

It belongs to the radical SAM superfamily. MoaA family. In terms of assembly, monomer and homodimer. Requires [4Fe-4S] cluster as cofactor.

It catalyses the reaction GTP + AH2 + S-adenosyl-L-methionine = (8S)-3',8-cyclo-7,8-dihydroguanosine 5'-triphosphate + 5'-deoxyadenosine + L-methionine + A + H(+). It participates in cofactor biosynthesis; molybdopterin biosynthesis. In terms of biological role, catalyzes the cyclization of GTP to (8S)-3',8-cyclo-7,8-dihydroguanosine 5'-triphosphate. This chain is GTP 3',8-cyclase, found in Peptoclostridium acidaminophilum (Eubacterium acidaminophilum).